We begin with the raw amino-acid sequence, 158 residues long: Glycine/sarcosine/betaine reductase complex component A1 (158 aa).

Selenocysteine 44 is an active-site residue. Position 44 (selenocysteine 44) is a non-standard amino acid, selenocysteine.

This sequence belongs to the GrdA family. Monomer. Component of the glycine, sarcosine and betaine reductase complexes, together with components B and C.

The enzyme catalyses acetyl phosphate + [thioredoxin]-disulfide + NH4(+) + H2O = [thioredoxin]-dithiol + glycine + phosphate + H(+). It carries out the reaction acetyl phosphate + methylamine + [thioredoxin]-disulfide + H2O = sarcosine + [thioredoxin]-dithiol + phosphate + H(+). It catalyses the reaction acetyl phosphate + trimethylamine + [thioredoxin]-disulfide + H2O = glycine betaine + [thioredoxin]-dithiol + phosphate + H(+). Its function is as follows. In the first step of glycine, betaine and sarcosine reductases, the substrate is bound to component PB via a Schiff base intermediate. Then the PB-activated substrate is nucleophilically attacked by the selenol anion of component PA to transform it to a carboxymethylated selenoether and the respective amine. By action of component PC, acetyl phosphate is formed, leaving component PA in its oxidized state. Finally component PA becomes reduced by the thioredoxin system to start a new catalytic cycle of reductive deamination. This is Glycine/sarcosine/betaine reductase complex component A1 (grdA1) from Peptoclostridium acidaminophilum (Eubacterium acidaminophilum).